We begin with the raw amino-acid sequence, 164 residues long: Phosphopantetheine adenylyltransferase (164 aa).

Thr-9 contributes to the substrate binding site. Residues 9–10 and His-17 each bind ATP; that span reads TF. Residues Lys-41, Leu-73, and Arg-87 each contribute to the substrate site. ATP-binding positions include 88-90, Glu-98, and 123-129; these read GLR and YMFISAT.

It belongs to the bacterial CoaD family. In terms of assembly, homohexamer. Mg(2+) serves as cofactor.

It localises to the cytoplasm. The catalysed reaction is (R)-4'-phosphopantetheine + ATP + H(+) = 3'-dephospho-CoA + diphosphate. It functions in the pathway cofactor biosynthesis; coenzyme A biosynthesis; CoA from (R)-pantothenate: step 4/5. Its function is as follows. Reversibly transfers an adenylyl group from ATP to 4'-phosphopantetheine, yielding dephospho-CoA (dPCoA) and pyrophosphate. In Nitrosomonas eutropha (strain DSM 101675 / C91 / Nm57), this protein is Phosphopantetheine adenylyltransferase.